We begin with the raw amino-acid sequence, 318 residues long: Xanthocillin biosynthesis cluster transcription factor xanC (318 aa).

Residues 1–27 (MHSQTTKDEQSKDDSSNEKQDAIERRR) show a composition bias toward basic and acidic residues. The segment at 1-39 (MHSQTTKDEQSKDDSSNEKQDAIERRRLQNRLSQRNHRR) is disordered. The region spanning 20 to 52 (QDAIERRRLQNRLSQRNHRRKIRDRIAKLQERV) is the bZIP domain. Residues 25–40 (RRRLQNRLSQRNHRRK) are basic motif. Positions 41 to 48 (IRDRIAKL) are leucine-zipper. Disordered regions lie at residues 71–107 (PPAA…QRNV), 123–171 (PSSS…FSLD), and 269–318 (GRHC…SMML). Low complexity-rich tracts occupy residues 123 to 139 (PSSS…PFDL) and 147 to 171 (STNS…FSLD). Residues 293–318 (APSSTPFCPLHPSQSSSLDNYQSMML) show a composition bias toward polar residues.

It belongs to the bZIP family.

It is found in the nucleus. Its function is as follows. Transcription regulator that specifically up-regulates the gene cluster that mediates the biosynthesis of the isocyanide xanthocillin and its derivatives. The chain is Xanthocillin biosynthesis cluster transcription factor xanC from Aspergillus fumigatus (strain ATCC MYA-4609 / CBS 101355 / FGSC A1100 / Af293) (Neosartorya fumigata).